Here is a 76-residue protein sequence, read N- to C-terminus: Cytochrome c oxidase subunit 6C-1 (76 aa).

Over 2–10 (SLAKPAMRG) the chain is Mitochondrial matrix. A helical membrane pass occupies residues 11–51 (LLGKRLRFHLPIAFTLSLVAALGFKYGVTEPRKQAYADFYK). Residues 52–76 (QYDAVKDFNAMREAGIFESVRPSGE) are Mitochondrial intermembrane-facing.

This sequence belongs to the cytochrome c oxidase subunit 6c family. As to quaternary structure, component of the cytochrome c oxidase (complex IV, CIV), a multisubunit enzyme composed of 14 subunits. The complex is composed of a catalytic core of 3 subunits MT-CO1, MT-CO2 and MT-CO3, encoded in the mitochondrial DNA, and 11 supernumerary subunits COX4I, COX5A, COX5B, COX6A, COX6B, COX6C, COX7A, COX7B, COX7C, COX8 and NDUFA4, which are encoded in the nuclear genome. The complex exists as a monomer or a dimer and forms supercomplexes (SCs) in the inner mitochondrial membrane with NADH-ubiquinone oxidoreductase (complex I, CI) and ubiquinol-cytochrome c oxidoreductase (cytochrome b-c1 complex, complex III, CIII), resulting in different assemblies (supercomplex SCI(1)III(2)IV(1) and megacomplex MCI(2)III(2)IV(2)).

The protein localises to the mitochondrion inner membrane. The protein operates within energy metabolism; oxidative phosphorylation. Functionally, component of the cytochrome c oxidase, the last enzyme in the mitochondrial electron transport chain which drives oxidative phosphorylation. The respiratory chain contains 3 multisubunit complexes succinate dehydrogenase (complex II, CII), ubiquinol-cytochrome c oxidoreductase (cytochrome b-c1 complex, complex III, CIII) and cytochrome c oxidase (complex IV, CIV), that cooperate to transfer electrons derived from NADH and succinate to molecular oxygen, creating an electrochemical gradient over the inner membrane that drives transmembrane transport and the ATP synthase. Cytochrome c oxidase is the component of the respiratory chain that catalyzes the reduction of oxygen to water. Electrons originating from reduced cytochrome c in the intermembrane space (IMS) are transferred via the dinuclear copper A center (CU(A)) of subunit 2 and heme A of subunit 1 to the active site in subunit 1, a binuclear center (BNC) formed by heme A3 and copper B (CU(B)). The BNC reduces molecular oxygen to 2 water molecules using 4 electrons from cytochrome c in the IMS and 4 protons from the mitochondrial matrix. The sequence is that of Cytochrome c oxidase subunit 6C-1 from Thunnus obesus (Bigeye tuna).